A 192-amino-acid chain; its full sequence is Elongation factor P (192 aa).

Belongs to the elongation factor P family.

Its subcellular location is the cytoplasm. It functions in the pathway protein biosynthesis; polypeptide chain elongation. In terms of biological role, involved in peptide bond synthesis. Stimulates efficient translation and peptide-bond synthesis on native or reconstituted 70S ribosomes in vitro. Probably functions indirectly by altering the affinity of the ribosome for aminoacyl-tRNA, thus increasing their reactivity as acceptors for peptidyl transferase. This is Elongation factor P from Borrelia turicatae (strain 91E135).